The chain runs to 870 residues: Patatin-like phospholipase domain-containing protein NCU11180 (870 aa).

Disordered regions lie at residues 1-24 (MADD…PPEA) and 131-158 (KVIK…KGVA). The segment covering 131–141 (KVIKTDRDEKR) has biased composition (basic and acidic residues). Residues 142–155 (NKRGKDRKNKKPRK) show a composition bias toward basic residues. A helical transmembrane segment spans residues 183 to 203 (WPFLLFVSFWIVGLGMAYLAT). Residues 281 to 320 (EEVERELESQSQNSDSGVASGEETSNTKAGGGNNGNDKKT) are disordered. A compositionally biased stretch (polar residues) spans 289–308 (SQSQNSDSGVASGEETSNTK). The 192-residue stretch at 399-590 (LCLSGGATFA…RTDIPIKSLN (192 aa)) folds into the PNPLA domain. The GXSXG motif lies at 430–434 (GTSGG). Ser432 (nucleophile) is an active-site residue. Asp577 functions as the Proton acceptor in the catalytic mechanism. 2 disordered regions span residues 735 to 786 (RRET…DRRG) and 804 to 870 (GREG…HSRT). The segment covering 818 to 834 (TEDELTMTELEGEDDDG) has biased composition (acidic residues).

This sequence belongs to the PLPL family.

The protein resides in the membrane. In terms of biological role, probable lipid hydrolase. This Neurospora crassa (strain ATCC 24698 / 74-OR23-1A / CBS 708.71 / DSM 1257 / FGSC 987) protein is Patatin-like phospholipase domain-containing protein NCU11180.